Here is a 594-residue protein sequence, read N- to C-terminus: DNA polymerase II small subunit (594 aa).

The protein belongs to the DNA polymerase delta/II small subunit family. In terms of assembly, heterodimer of a large subunit and a small subunit.

The enzyme catalyses DNA(n) + a 2'-deoxyribonucleoside 5'-triphosphate = DNA(n+1) + diphosphate. It carries out the reaction Exonucleolytic cleavage in the 3'- to 5'-direction to yield nucleoside 5'-phosphates.. Its function is as follows. Possesses two activities: a DNA synthesis (polymerase) and an exonucleolytic activity that degrades single-stranded DNA in the 3' to 5' direction. Has a template-primer preference which is characteristic of a replicative DNA polymerase. The sequence is that of DNA polymerase II small subunit (polB) from Methanocaldococcus jannaschii (strain ATCC 43067 / DSM 2661 / JAL-1 / JCM 10045 / NBRC 100440) (Methanococcus jannaschii).